The following is a 485-amino-acid chain: MDSAEKGLLVVSDREEVNKKDGFLRETKKLSYIAGPMIAVNSSMYVLQVISIMMVGHLGELFLSSTAIAVSFCSVTGFSVVFGLASALETLCGQANGAKQYEKLGVHTYTGIVSLFLVCIPLSLLWTYIGDILSLIGQDAMVAQEAGKFATWLIPALFGYATLQPLVRFFQAQSLILPLVMSSVSSLCIHIVLCWSLVFKFGLGSLGAAIAIGVSYWLNVTVLGLYMTFSSSCSKSRATISMSLFEGMGEFFRFGIPSASMICLEWWSFEFLVLLSGILPNPKLEASVLSVCLSTQSSLYQIPESLGAAASTRVANELGAGNPKQARMAVYTAMVITGVESIMVGAIVFGARNVFGYLFSSETEVVDYVKSMAPLLSLSVIFDALHAALSGVARGSGRQDIGAYVNLAAYYLFGIPTAILLAFGFKMRGRGLWIGITVGSCVQAVLLGLIVILTNWKKQARKARERVMGDEYEEKESEEEHEYIS.

Transmembrane regions (helical) follow at residues 30-50, 68-88, 112-132, 147-167, 175-195, 207-227, 259-279, 288-308, 329-349, 372-392, 405-425, and 432-452; these read LSYIAGPMIAVNSSMYVLQVI, IAVSFCSVTGFSVVFGLASAL, IVSLFLVCIPLSLLWTYIGDI, GKFATWLIPALFGYATLQPLV, LILPLVMSSVSSLCIHIVLCW, GAAIAIGVSYWLNVTVLGLYM, ASMICLEWWSFEFLVLLSGIL, VLSVCLSTQSSLYQIPESLGA, AVYTAMVITGVESIMVGAIVF, MAPLLSLSVIFDALHAALSGV, VNLAAYYLFGIPTAILLAFGF, and LWIGITVGSCVQAVLLGLIVI.

This sequence belongs to the multi antimicrobial extrusion (MATE) (TC 2.A.66.1) family.

The protein localises to the membrane. In Arabidopsis thaliana (Mouse-ear cress), this protein is Protein DETOXIFICATION 14.